Here is a 969-residue protein sequence, read N- to C-terminus: RNA polymerase-associated protein RapA (969 aa).

In terms of domain architecture, Helicase ATP-binding spans 164–334 (EVGRRHAPRV…FARLRLLDPD (171 aa)). 177–184 (DEVGLGKT) serves as a coordination point for ATP. Residues 280-283 (DEAH) carry the DEAH box motif. Residues 492–686 (RVNWLLEKVK…ELKSQLEQGR (195 aa)) form the Helicase C-terminal domain.

It belongs to the SNF2/RAD54 helicase family. RapA subfamily. As to quaternary structure, interacts with the RNAP. Has a higher affinity for the core RNAP than for the holoenzyme. Its ATPase activity is stimulated by binding to RNAP.

Transcription regulator that activates transcription by stimulating RNA polymerase (RNAP) recycling in case of stress conditions such as supercoiled DNA or high salt concentrations. Probably acts by releasing the RNAP, when it is trapped or immobilized on tightly supercoiled DNA. Does not activate transcription on linear DNA. Probably not involved in DNA repair. The chain is RNA polymerase-associated protein RapA from Vibrio parahaemolyticus serotype O3:K6 (strain RIMD 2210633).